The chain runs to 972 residues: Optomotor-blind protein (972 aa).

6 disordered regions span residues Ser-44–Ala-248, Pro-263–His-286, Ala-508–Ala-563, Ala-645–Pro-676, Ala-805–Leu-889, and Glu-918–Gln-972. Composition is skewed to low complexity over residues Gly-49–Asn-80 and Ser-97–Ser-142. The segment covering Pro-155 to Asn-176 has biased composition (pro residues). 2 stretches are compositionally biased toward low complexity: residues Asn-177–His-193 and Ala-201–Pro-212. Over residues Pro-213–Pro-225 the composition is skewed to pro residues. Residues His-226–His-237 are compositionally biased toward low complexity. Residues Pro-274–His-286 show a composition bias toward basic residues. The segment at residues Leu-332–Asp-513 is a DNA-binding region (T-box). The segment covering Pro-818–Val-831 has biased composition (gly residues). Over residues Pro-835–Pro-851 the composition is skewed to low complexity. Position 887 is a phosphoserine (Ser-887). A compositionally biased stretch (basic residues) spans His-952–His-963.

In terms of tissue distribution, in third-instar larvae, expressed in the brain region that will develop into optic lobes and more weakly in the thoracic part of the ventral ganglion.

The protein localises to the nucleus. In terms of biological role, essential protein that may function as a transcription regulator. Vital for pupal development. Required for proper development of the optic lobes and wings, and abdominal pigmentation. This chain is Optomotor-blind protein (bi), found in Drosophila melanogaster (Fruit fly).